Here is a 56-residue protein sequence, read N- to C-terminus: GYTHAFESTFESKSGLQEYLDSAALAAFAEGFLPTLSQRSFNWGTDLGMESAELNR.

In terms of domain architecture, Stress-response A/B barrel spans 1 to 44; that stretch reads GYTHAFESTFESKSGLQEYLDSAALAAFAEGFLPTLSQRSFNWG.

The chain is Stable protein 1 from Populus euphratica (Euphrates poplar).